The sequence spans 122 residues: Large ribosomal subunit protein uL24 (122 aa).

This sequence belongs to the universal ribosomal protein uL24 family. As to quaternary structure, part of the 50S ribosomal subunit.

Functionally, one of two assembly initiator proteins, it binds directly to the 5'-end of the 23S rRNA, where it nucleates assembly of the 50S subunit. Its function is as follows. One of the proteins that surrounds the polypeptide exit tunnel on the outside of the subunit. This Renibacterium salmoninarum (strain ATCC 33209 / DSM 20767 / JCM 11484 / NBRC 15589 / NCIMB 2235) protein is Large ribosomal subunit protein uL24.